Reading from the N-terminus, the 374-residue chain is Nuclear hormone receptor family member nhr-57 (374 aa).

Residues 7-84 constitute a DNA-binding region (nuclear receptor); that stretch reads RKYCSVCHQL…VGMNPEVVQA (78 aa). NR C4-type zinc fingers lie at residues 10-30 and 48-67; these read CSVCHQLGDGYHFGAIACKAC and CRKKNECVIKMSSRDSCKSC. Residues 124 to 374 enclose the NR LBD domain; sequence QMTPTLCGVM…DKIYKIIDGQ (251 aa).

Belongs to the nuclear hormone receptor family.

It is found in the nucleus. Its function is as follows. Orphan nuclear receptor. The chain is Nuclear hormone receptor family member nhr-57 (nhr-57) from Caenorhabditis elegans.